Here is a 366-residue protein sequence, read N- to C-terminus: Cyanide hydratase (366 aa).

Positions Y6 to L285 constitute a CN hydrolase domain. The active-site Proton acceptor is E46. K128 is a catalytic residue. The active-site Nucleophile is C163.

Belongs to the carbon-nitrogen hydrolase superfamily. Nitrilase family. Oligomer of dimers, forming left-handed helical fibers.

It catalyses the reaction formamide = hydrogen cyanide + H2O. Functionally, catalyzes the hydration of cyanide to formamide. Degradation of cyanide may be important for plant pathogenic fungi in infection of cyanogenic plants. Can also transform some nitriles like 2-cyanopyridine and fumaronitrile. This is Cyanide hydratase from Pyrenophora teres f. teres (strain 0-1) (Barley net blotch fungus).